A 215-amino-acid chain; its full sequence is Large ribosomal subunit protein uL16m (215 aa).

The N-terminal 36 residues, Met1 to Trp36, are a transit peptide targeting the mitochondrion.

This sequence belongs to the universal ribosomal protein uL16 family. In terms of assembly, component of the mitochondrial large ribosomal subunit (mt-LSU). Mature yeast 74S mitochondrial ribosomes consist of a small (37S) and a large (54S) subunit. The 37S small subunit contains a 15S ribosomal RNA (15S mt-rRNA) and at least 32 different proteins. The 54S large subunit contains a 21S rRNA (21S mt-rRNA) and at least 45 different proteins.

Its subcellular location is the mitochondrion. Its function is as follows. Component of the mitochondrial ribosome (mitoribosome), a dedicated translation machinery responsible for the synthesis of mitochondrial genome-encoded proteins, including at least some of the essential transmembrane subunits of the mitochondrial respiratory chain. The mitoribosomes are attached to the mitochondrial inner membrane and translation products are cotranslationally integrated into the membrane. The sequence is that of Large ribosomal subunit protein uL16m (mrpl16) from Schizosaccharomyces pombe (strain 972 / ATCC 24843) (Fission yeast).